The sequence spans 277 residues: Inositol monophosphatase 1 (277 aa).

Residues glutamate 70, aspartate 90, isoleucine 92, and aspartate 93 each coordinate Mg(2+). Residue glutamate 70 coordinates substrate. 92 to 95 (IDGT) serves as a coordination point for substrate. Residue threonine 168 is modified to Phosphothreonine. Substrate-binding positions include 194-196 (GTA), glutamate 213, and aspartate 220. A Mg(2+)-binding site is contributed by aspartate 220.

This sequence belongs to the inositol monophosphatase superfamily. In terms of assembly, homodimer. The cofactor is Mg(2+).

The protein resides in the cytoplasm. The enzyme catalyses a myo-inositol phosphate + H2O = myo-inositol + phosphate. The catalysed reaction is 1D-myo-inositol 1-phosphate + H2O = myo-inositol + phosphate. It carries out the reaction 1D-myo-inositol 2-phosphate + H2O = myo-inositol + phosphate. It catalyses the reaction 1D-myo-inositol 3-phosphate + H2O = myo-inositol + phosphate. The enzyme catalyses 1D-myo-inositol 4-phosphate + H2O = myo-inositol + phosphate. The catalysed reaction is 1D-myo-inositol 5-phosphate + H2O = myo-inositol + phosphate. It carries out the reaction 1D-myo-inositol 6-phosphate + H2O = myo-inositol + phosphate. It catalyses the reaction scyllo-inositol 1-phosphate + H2O = scyllo-inositol + phosphate. The enzyme catalyses alpha-D-galactose 1-phosphate + H2O = D-galactose + phosphate. The catalysed reaction is alpha-D-glucose 1-phosphate + H2O = D-glucose + phosphate. It carries out the reaction D-glucose 6-phosphate + H2O = D-glucose + phosphate. It catalyses the reaction beta-D-fructose 1-phosphate + H2O = D-fructose + phosphate. The enzyme catalyses glycerol 2-phosphate + H2O = glycerol + phosphate. The catalysed reaction is adenosine 2'-phosphate + H2O = adenosine + phosphate. Its pathway is polyol metabolism; myo-inositol biosynthesis; myo-inositol from D-glucose 6-phosphate: step 2/2. Its activity is regulated as follows. Inhibited by Li(+), Ca(2+) and Mn(2+), but also by Mg(2+) at concentrations above 3 mM. In terms of biological role, phosphatase involved in the dephosphorylation of myo-inositol monophosphate to generate myo-inositol. Is also able to dephosphorylate scyllo-inositol-phosphate, myo-inositol 1,4-diphosphate, scyllo-inositol-1,3-diphosphate and scyllo-inositol-1,4-diphosphate. Also dephosphorylates in vitro other sugar-phosphates including D-galactose-1-phosphate, glucose-1-phosphate, glucose-6-phosphate, fructose-1-phosphate, beta-glycerophosphate and 2'-AMP. Responsible for the provision of inositol required for synthesis of phosphatidylinositol and polyphosphoinositides, and involved in maintaining normal brain function. Has been implicated as the pharmacological target for lithium Li(+) action in brain. The protein is Inositol monophosphatase 1 (IMPA1) of Sus scrofa (Pig).